We begin with the raw amino-acid sequence, 199 residues long: Pneumococcal vaccine antigen A homolog (199 aa).

It localises to the cell surface. The protein is Pneumococcal vaccine antigen A homolog (pvaA) of Streptococcus pyogenes serotype M6 (strain ATCC BAA-946 / MGAS10394).